A 148-amino-acid chain; its full sequence is 1,4-dihydroxy-2-naphthoyl-CoA hydrolase (148 aa).

Residue Asp15 is part of the active site.

Belongs to the 4-hydroxybenzoyl-CoA thioesterase family. DHNA-CoA hydrolase subfamily.

The enzyme catalyses 1,4-dihydroxy-2-naphthoyl-CoA + H2O = 1,4-dihydroxy-2-naphthoate + CoA + H(+). It functions in the pathway cofactor biosynthesis; phylloquinone biosynthesis. The protein operates within quinol/quinone metabolism; 1,4-dihydroxy-2-naphthoate biosynthesis; 1,4-dihydroxy-2-naphthoate from chorismate: step 7/7. In terms of biological role, catalyzes the hydrolysis of 1,4-dihydroxy-2-naphthoyl-CoA (DHNA-CoA) to 1,4-dihydroxy-2-naphthoate (DHNA), a reaction involved in phylloquinone (vitamin K1) biosynthesis. The chain is 1,4-dihydroxy-2-naphthoyl-CoA hydrolase from Nostoc punctiforme (strain ATCC 29133 / PCC 73102).